The sequence spans 64 residues: Long neurotoxin MS2 (64 aa).

5 disulfides stabilise this stretch: Cys3/Cys24, Cys6/Cys11, Cys17/Cys41, Cys45/Cys57, and Cys58/Cys63.

It belongs to the three-finger toxin family. Ancestral subfamily. As to expression, expressed by the venom gland.

The protein resides in the secreted. In terms of biological role, produces peripheral paralysis by blocking neuromuscular transmission at the postsynaptic site. Very weak inhibitor of the endogenous nicotinic acetylcholine receptors (nAChR) in the human rhabdomyosarcoma TE 671 cell line. Not toxic to mice by intraperitoneal injection or to zebrafish by injection at the back of the dorsolateral region. The protein is Long neurotoxin MS2 of Micrurus surinamensis (Surinam coral snake).